The chain runs to 349 residues: Adenosine deaminase (349 aa).

2 residues coordinate Zn(2+): His25 and His27. Residues His27, Asp29, and Gly182 each coordinate substrate. His209 provides a ligand contact to Zn(2+). Glu212 serves as the catalytic Proton donor. Asp289 serves as a coordination point for Zn(2+).

Belongs to the metallo-dependent hydrolases superfamily. Adenosine and AMP deaminases family. Adenosine deaminase subfamily. The cofactor is Zn(2+).

It catalyses the reaction adenosine + H2O + H(+) = inosine + NH4(+). It carries out the reaction 2'-deoxyadenosine + H2O + H(+) = 2'-deoxyinosine + NH4(+). In terms of biological role, catalyzes the hydrolytic deamination of adenosine and 2-deoxyadenosine. In Streptococcus mutans serotype c (strain ATCC 700610 / UA159), this protein is Adenosine deaminase.